We begin with the raw amino-acid sequence, 114 residues long: uncharacterized protein (114 aa).

Residues 31–72 (EFEKLVSEQMKTMDKLLDLQSELDRCKQIEAELRHLERDARL) are a coiled coil.

This is an uncharacterized protein from Bacillus subtilis (strain 168).